Here is a 469-residue protein sequence, read N- to C-terminus: ATP synthase subunit beta (469 aa).

156–163 serves as a coordination point for ATP; that stretch reads GGAGVGKT.

This sequence belongs to the ATPase alpha/beta chains family. As to quaternary structure, F-type ATPases have 2 components, CF(1) - the catalytic core - and CF(0) - the membrane proton channel. CF(1) has five subunits: alpha(3), beta(3), gamma(1), delta(1), epsilon(1). CF(0) has three main subunits: a(1), b(2) and c(9-12). The alpha and beta chains form an alternating ring which encloses part of the gamma chain. CF(1) is attached to CF(0) by a central stalk formed by the gamma and epsilon chains, while a peripheral stalk is formed by the delta and b chains.

It is found in the cell membrane. It carries out the reaction ATP + H2O + 4 H(+)(in) = ADP + phosphate + 5 H(+)(out). Its function is as follows. Produces ATP from ADP in the presence of a proton gradient across the membrane. The catalytic sites are hosted primarily by the beta subunits. The protein is ATP synthase subunit beta of Bacillus cereus (strain AH820).